Here is a 248-residue protein sequence, read N- to C-terminus: Lysine-rich arabinogalactan protein 19 (248 aa).

The first 24 residues, 1-24 (MESNSIIWSLLLASALISSFSVNA), serve as a signal peptide directing secretion. The segment covering 25 to 37 (QGPAASPVTSTTT) has biased composition (low complexity). The disordered stretch occupies residues 25–221 (QGPAASPVTS…APSPNTNGGN (197 aa)). 3 stretches are compositionally biased toward pro residues: residues 38–57 (APPP…PTTT), 67–86 (PASP…PAPK), and 94–171 (ATPP…PAPA). Over residues 173 to 187 (TKHKRKHKHKRHHHA) the composition is skewed to basic residues. Positions 189-203 (APAPIPPSPPSPPVL) are enriched in pro residues. The GPI-anchor amidated serine moiety is linked to residue serine 196. The propeptide at 197–248 (PPSPPVLTDPQDTAPAPSPNTNGGNALNQLKGRAVMWLNTGLVILFLLAMTA) is removed in mature form.

The protein belongs to the lysine-rich AGP family. In terms of processing, O-glycosylated on the hydroxyproline residues. As to expression, strongly expressed in stems, moderately expressed in flowers and roots and weakly expressed in young leaves.

Its subcellular location is the cell membrane. Its function is as follows. Proteoglycan that seems to be implicated in diverse developmental roles such as differentiation, cell-cell recognition, embryogenesis and programmed cell death. The sequence is that of Lysine-rich arabinogalactan protein 19 (AGP19) from Arabidopsis thaliana (Mouse-ear cress).